A 670-amino-acid polypeptide reads, in one-letter code: tRNA 5-methylaminomethyl-2-thiouridine biosynthesis bifunctional protein MnmC (670 aa).

The interval 1-242 is tRNA (mnm(5)s(2)U34)-methyltransferase; that stretch reads MTFSVQHAEI…KRECLSGLKI (242 aa). The segment at 269–670 is FAD-dependent cmnm(5)s(2)U34 oxidoreductase; it reads IGGGIASLCA…KKWLKGSKVE (402 aa).

This sequence in the N-terminal section; belongs to the methyltransferase superfamily. tRNA (mnm(5)s(2)U34)-methyltransferase family. It in the C-terminal section; belongs to the DAO family. FAD serves as cofactor.

It is found in the cytoplasm. The catalysed reaction is 5-aminomethyl-2-thiouridine(34) in tRNA + S-adenosyl-L-methionine = 5-methylaminomethyl-2-thiouridine(34) in tRNA + S-adenosyl-L-homocysteine + H(+). Functionally, catalyzes the last two steps in the biosynthesis of 5-methylaminomethyl-2-thiouridine (mnm(5)s(2)U) at the wobble position (U34) in tRNA. Catalyzes the FAD-dependent demodification of cmnm(5)s(2)U34 to nm(5)s(2)U34, followed by the transfer of a methyl group from S-adenosyl-L-methionine to nm(5)s(2)U34, to form mnm(5)s(2)U34. The polypeptide is tRNA 5-methylaminomethyl-2-thiouridine biosynthesis bifunctional protein MnmC (Haemophilus influenzae (strain PittEE)).